The sequence spans 1902 residues: Putative surface cell antigen sca1 (1902 aa).

Residues 1–28 (MNKLTEQHLLKKSRFLKYSLLASISVGA) form the signal peptide. Disordered stretches follow at residues 140–273 (GIEK…TFVP), 420–485 (QGVF…SRTA), 707–729 (TTTT…YSSS), 858–885 (NRRR…AWGN), and 1470–1548 (KSES…SDGD). 2 stretches are compositionally biased toward polar residues: residues 146-159 (QSQN…TEQM) and 168-197 (TASS…SPEH). A compositionally biased stretch (low complexity) spans 199–212 (TTAPGTPSSTPATP). Positions 225 to 238 (LGANTPPNINTNSK) are enriched in polar residues. The segment covering 246-264 (SSSGPQQQAVQSSSQVKSE) has biased composition (low complexity). Positions 423–439 (FNKNKSSGGNARKSSAG) are enriched in polar residues. Positions 445–482 (KKQEAQKQLSEIKKQEKAIKTASDKAKEVAASAKKETS) are enriched in basic and acidic residues. Over residues 863–874 (RDGETSKQRTVD) the composition is skewed to basic and acidic residues. Low complexity predominate over residues 1491–1507 (LSSLPALASSNESALAL). Acidic residues predominate over residues 1521–1538 (SSEDEESYDSGFEEEEET). An Autotransporter domain is found at 1618 to 1902 (ESHIKRGLWM…QGSVKLKVNL (285 aa)).

It is found in the cell outer membrane. The chain is Putative surface cell antigen sca1 (sca1) from Rickettsia conorii (strain ATCC VR-613 / Malish 7).